The following is a 247-amino-acid chain: Capsid protein (247 aa).

The Bipartite nuclear localization signal signature appears at 1 to 28 (MSGALKRKRSDEVAWSRRRPVKKPVRRA). The interval 1–39 (MSGALKRKRSDEVAWSRRRPVKKPVRRAPPPRAGPSVRR) is disordered. Positions 16–26 (SRRRPVKKPVR) are enriched in basic residues.

The protein belongs to the geminiviridae capsid protein family. As to quaternary structure, homomultimer. Interacts with the movement protein. Binds to single-stranded and double-stranded viral DNA.

The protein resides in the virion. Its subcellular location is the host nucleus. Its function is as follows. Encapsidates the viral genome into characteristic twinned ('geminate') particles. Binds the genomic viral ssDNA and shuttles it into and out of the cell nucleus. Plays a role in protection of the genome from degradation, virus acquisition and transmission by insect vectors, infectivity, and systemic movement. The CP of monopartite geminiviruses is absolutely essential for virus movement. This chain is Capsid protein, found in Megathyrsus maximus (PanSV).